We begin with the raw amino-acid sequence, 64 residues long: UPF0434 protein Bmul_0750/BMULJ_02510 (64 aa).

Belongs to the UPF0434 family.

This Burkholderia multivorans (strain ATCC 17616 / 249) protein is UPF0434 protein Bmul_0750/BMULJ_02510.